The sequence spans 89 residues: UPF0147 protein Saci_0891 (89 aa).

This sequence belongs to the UPF0147 family.

This Sulfolobus acidocaldarius (strain ATCC 33909 / DSM 639 / JCM 8929 / NBRC 15157 / NCIMB 11770) protein is UPF0147 protein Saci_0891.